The following is a 469-amino-acid chain: Trigger factor (469 aa).

Positions 162 to 243 (GDFVSIDLSA…VKSVKERELP (82 aa)) constitute a PPIase FKBP-type domain. Residues 438 to 469 (GPSGEQAAEDSAEESTDAAEGEAAEDADDTDK) are disordered. A compositionally biased stretch (acidic residues) spans 444–469 (AAEDSAEESTDAAEGEAAEDADDTDK).

Belongs to the FKBP-type PPIase family. Tig subfamily.

Its subcellular location is the cytoplasm. The enzyme catalyses [protein]-peptidylproline (omega=180) = [protein]-peptidylproline (omega=0). Functionally, involved in protein export. Acts as a chaperone by maintaining the newly synthesized protein in an open conformation. Functions as a peptidyl-prolyl cis-trans isomerase. The polypeptide is Trigger factor (Mycolicibacterium smegmatis (strain ATCC 700084 / mc(2)155) (Mycobacterium smegmatis)).